Consider the following 223-residue polypeptide: MDLASLRAQQIELASSVCREDRLDKDPPAFIGGADVGFEQGGEVTRAAMVLLKYPSLELVEYKVARIATTMPYIPGFLSFREYPALLAAWEQLSQKPDLLFVDGHGISHPRRLGVASHFGLLVDVPTIGVAKKRLCGKFEPLSTEPGALSPLMDKGEQLAWVWRSKARCNPLFIATGHRVSTDSALAWVQRCMKGYRLPEPTRWADAVASGRPAFVRWQEIQR.

2 residues coordinate Mg(2+): D35 and D103.

Belongs to the endonuclease V family. Requires Mg(2+) as cofactor.

The protein resides in the cytoplasm. It catalyses the reaction Endonucleolytic cleavage at apurinic or apyrimidinic sites to products with a 5'-phosphate.. Its function is as follows. DNA repair enzyme involved in the repair of deaminated bases. Selectively cleaves double-stranded DNA at the second phosphodiester bond 3' to a deoxyinosine leaving behind the intact lesion on the nicked DNA. This is Endonuclease V from Salmonella enteritidis PT4 (strain P125109).